The primary structure comprises 63 residues: Large ribosomal subunit protein bL28 (63 aa).

It belongs to the bacterial ribosomal protein bL28 family.

This is Large ribosomal subunit protein bL28 from Clostridium perfringens (strain SM101 / Type A).